Consider the following 86-residue polypeptide: Selenoprotein W (86 aa).

Positions 10–13 (CGGU) form a cross-link, cysteinyl-selenocysteine (Cys-Sec); redox-active. Residue Sec13 is a non-standard amino acid, selenocysteine.

The protein belongs to the SelWTH family. Selenoprotein W subfamily.

Its subcellular location is the cytoplasm. Plays a role as a glutathione (GSH)-dependent antioxidant. May be involved in a redox-related process. May play a role in the myopathies of selenium deficiency. The chain is Selenoprotein W from Danio rerio (Zebrafish).